The following is a 478-amino-acid chain: NADH-quinone oxidoreductase subunit N (478 aa).

14 consecutive transmembrane segments (helical) span residues 5–25, 37–57, 68–88, 99–119, 121–141, 156–176, 199–219, 231–251, 268–288, 293–313, 320–340, 365–385, 401–421, and 446–466; these read LASP…VGVA, MLTL…ALGL, FAVM…VLSL, FEFP…VSAS, FMTL…LAAF, FVLG…IYGF, LTVG…AAPF, PTPV…AMML, VVAL…IGQT, LMAY…AAGS, LLIY…CILA, ALLL…SGFF, LLWG…YYYL, and VVAV…APIL.

It belongs to the complex I subunit 2 family. In terms of assembly, NDH-1 is composed of 14 different subunits. Subunits NuoA, H, J, K, L, M, N constitute the membrane sector of the complex.

It localises to the cell inner membrane. The catalysed reaction is a quinone + NADH + 5 H(+)(in) = a quinol + NAD(+) + 4 H(+)(out). In terms of biological role, NDH-1 shuttles electrons from NADH, via FMN and iron-sulfur (Fe-S) centers, to quinones in the respiratory chain. The immediate electron acceptor for the enzyme in this species is believed to be ubiquinone. Couples the redox reaction to proton translocation (for every two electrons transferred, four hydrogen ions are translocated across the cytoplasmic membrane), and thus conserves the redox energy in a proton gradient. The polypeptide is NADH-quinone oxidoreductase subunit N (Granulibacter bethesdensis (strain ATCC BAA-1260 / CGDNIH1)).